The following is a 68-amino-acid chain: Large ribosomal subunit protein bL31 (68 aa).

The Zn(2+) site is built by cysteine 16, cysteine 18, cysteine 38, and cysteine 41.

The protein belongs to the bacterial ribosomal protein bL31 family. Type A subfamily. Part of the 50S ribosomal subunit. Zn(2+) is required as a cofactor.

In terms of biological role, binds the 23S rRNA. The chain is Large ribosomal subunit protein bL31 from Thiobacillus denitrificans (strain ATCC 25259 / T1).